A 244-amino-acid chain; its full sequence is UDP-2,3-diacylglucosamine hydrolase (244 aa).

Residues Asp8, His10, Asp41, Asn79, and His114 each coordinate Mn(2+). Position 79 to 80 (79 to 80 (NR)) interacts with substrate. 5 residues coordinate substrate: Asp122, Ser160, Asn164, Lys167, and His195. Positions 195 and 197 each coordinate Mn(2+).

This sequence belongs to the LpxH family. The cofactor is Mn(2+).

It is found in the cell inner membrane. The catalysed reaction is UDP-2-N,3-O-bis[(3R)-3-hydroxytetradecanoyl]-alpha-D-glucosamine + H2O = 2-N,3-O-bis[(3R)-3-hydroxytetradecanoyl]-alpha-D-glucosaminyl 1-phosphate + UMP + 2 H(+). The protein operates within glycolipid biosynthesis; lipid IV(A) biosynthesis; lipid IV(A) from (3R)-3-hydroxytetradecanoyl-[acyl-carrier-protein] and UDP-N-acetyl-alpha-D-glucosamine: step 4/6. In terms of biological role, hydrolyzes the pyrophosphate bond of UDP-2,3-diacylglucosamine to yield 2,3-diacylglucosamine 1-phosphate (lipid X) and UMP by catalyzing the attack of water at the alpha-P atom. Involved in the biosynthesis of lipid A, a phosphorylated glycolipid that anchors the lipopolysaccharide to the outer membrane of the cell. This is UDP-2,3-diacylglucosamine hydrolase from Hahella chejuensis (strain KCTC 2396).